The following is a 71-amino-acid chain: Antitoxin ParD2 (71 aa).

In terms of biological role, antitoxin component of a type II toxin-antitoxin (TA) system. This chain is Antitoxin ParD2 (parD2), found in Mycobacterium tuberculosis (strain CDC 1551 / Oshkosh).